The sequence spans 256 residues: Pimeloyl-[acyl-carrier protein] methyl ester esterase (256 aa).

In terms of domain architecture, AB hydrolase-1 spans 15–242 (HLVLLHGWGL…AAHAPFISHP (228 aa)). Residues W22, 82–83 (SL), and 143–147 (FLALQ) contribute to the substrate site. S82 functions as the Nucleophile in the catalytic mechanism. Catalysis depends on residues D207 and H235. H235 contacts substrate.

The protein belongs to the AB hydrolase superfamily. Carboxylesterase BioH family. As to quaternary structure, monomer.

It is found in the cytoplasm. It catalyses the reaction 6-carboxyhexanoyl-[ACP] methyl ester + H2O = 6-carboxyhexanoyl-[ACP] + methanol + H(+). It functions in the pathway cofactor biosynthesis; biotin biosynthesis. Functionally, the physiological role of BioH is to remove the methyl group introduced by BioC when the pimeloyl moiety is complete. It allows to synthesize pimeloyl-ACP via the fatty acid synthetic pathway through the hydrolysis of the ester bonds of pimeloyl-ACP esters. This chain is Pimeloyl-[acyl-carrier protein] methyl ester esterase, found in Salmonella newport (strain SL254).